We begin with the raw amino-acid sequence, 779 residues long: Pre-mRNA-splicing factor cef-1 (779 aa).

2 HTH myb-type domains span residues 1 to 56 (MPVV…DPSI) and 57 to 106 (KKIE…DEAE). DNA-binding regions (H-T-H motif) lie at residues 29-52 (WARVSSLLARKTPKQCKARWNEWL) and 80-102 (WRTIAPIVGRTANQCLERYQRLL). Disordered regions lie at residues 113-192 (LGLT…ESRR), 246-284 (EYQRAHFDPKKQQVGNKRKGEEDERDGKRRKGDKDPSVQ), 424-448 (TPLRAAGAGPGATPLRVGQTPLRTP), and 497-525 (WELELPDDQQEPKTAEQLEEDAAERDRRE). Basic and acidic residues predominate over residues 127–152 (SADDVRKLRPGEVDPDPETKPARPDT). Residues 157-204 (EDEKEMLSEARARLANTQGKKAKRKARERQQEESRRLAALQKRRELKT) are a coiled coil. 2 stretches are compositionally biased toward basic and acidic residues: residues 246–256 (EYQRAHFDPKK) and 263–281 (RKGEEDERDGKRRKGDKDP). The stretch at 653–772 (DEEEEQISTM…EELDALTLNG (120 aa)) forms a coiled coil.

This sequence belongs to the CEF1 family. Associated with the spliceosome.

It localises to the cytoplasm. The protein resides in the nucleus. In terms of biological role, involved in pre-mRNA splicing and cell cycle control. This Neurospora crassa (strain ATCC 24698 / 74-OR23-1A / CBS 708.71 / DSM 1257 / FGSC 987) protein is Pre-mRNA-splicing factor cef-1 (cef-1).